The sequence spans 329 residues: Isopenicillin N synthase (329 aa).

Residues Arg-87, Tyr-91, Ser-183, and Tyr-189 each contribute to the isopenicillin N site. Residues Arg-87, Tyr-91, Ser-183, Tyr-189, His-212, and Asp-214 each contribute to the N-[(5S)-5-amino-5-carboxypentanoyl]-L-cysteinyl-D-valine site. In terms of domain architecture, Fe2OG dioxygenase spans 180–286; it reads TLSSVSLIRY…RLSLPFFLNA (107 aa). Fe(2+) contacts are provided by His-212, Asp-214, and His-268. Arg-277 is a 2-oxoglutarate binding site. Ser-279 is a binding site for isopenicillin N. Residue Ser-279 participates in N-[(5S)-5-amino-5-carboxypentanoyl]-L-cysteinyl-D-valine binding.

This sequence belongs to the iron/ascorbate-dependent oxidoreductase family. Fe cation serves as cofactor. L-ascorbate is required as a cofactor.

It catalyses the reaction N-[(5S)-5-amino-5-carboxypentanoyl]-L-cysteinyl-D-valine + O2 = isopenicillin N + 2 H2O. It participates in antibiotic biosynthesis; penicillin G biosynthesis; penicillin G from L-alpha-aminoadipate and L-cysteine and L-valine: step 2/3. Its function is as follows. Removes, in the presence of oxygen, 4 hydrogen atoms from delta-L-(alpha-aminoadipyl)-L-cysteinyl-D-valine (ACV) to form the azetidinone and thiazolidine rings of isopenicillin. The polypeptide is Isopenicillin N synthase (pcbC) (Streptomyces jumonjinensis).